The sequence spans 331 residues: Serine racemase (331 aa).

The ATP site is built by Ser34 and Lys54. Catalysis depends on Lys59, which acts as the Proton acceptor. N6-(pyridoxal phosphate)lysine is present on Lys59. Position 81 (Thr81) interacts with Ca(2+). The Proton acceptor role is filled by Ser84. Asn86 is a pyridoxal 5'-phosphate binding site. An ATP-binding site is contributed by Tyr121. Asp178 is a binding site for Mg(2+). 3 residues coordinate pyridoxal 5'-phosphate: Gly186, Gly187, and Gly188. Ca(2+) contacts are provided by Glu210, Ala214, and Asp216. Glu210, Ala214, and Asp216 together coordinate Mg(2+). Residues Glu210, Ala214, and Asp216 each coordinate Mn(2+). Residue Lys278 participates in ATP binding. Ser314 provides a ligand contact to pyridoxal 5'-phosphate. Asn317 is an ATP binding site.

Belongs to the serine/threonine dehydratase family. As to quaternary structure, homodimer. Mg(2+) serves as cofactor. The cofactor is Mn(2+). Requires Ca(2+) as cofactor. Pyridoxal 5'-phosphate is required as a cofactor. As to expression, expressed in the whole plant.

The catalysed reaction is L-serine = D-serine. The enzyme catalyses L-serine = pyruvate + NH4(+). It carries out the reaction D-serine = pyruvate + NH4(+). With respect to regulation, inhibited by hydroxylamine. Racemase activity is enhanced by Ca(2+), Mg(2+), Mn(2+), and is decreased by Ni(2+), Zn(2+). Hydratase activity is enhanced by Ca(2+), Mg(2+), Mn(2+), Cu(2+), Fe(2+), Ni(2+). In terms of biological role, catalyzes the synthesis of D-serine from L-serine. Has dehydratase activity towards both L-serine and D-serine. Displays high substrate specificity for L-serine, whereas L-alanine, L-arginine, and L-glutamine were poor substrates. In Arabidopsis thaliana (Mouse-ear cress), this protein is Serine racemase (SR).